The sequence spans 330 residues: Phosphate acyltransferase (330 aa).

The protein belongs to the PlsX family. As to quaternary structure, homodimer. Probably interacts with PlsY.

It is found in the cytoplasm. It carries out the reaction a fatty acyl-[ACP] + phosphate = an acyl phosphate + holo-[ACP]. It functions in the pathway lipid metabolism; phospholipid metabolism. Its function is as follows. Catalyzes the reversible formation of acyl-phosphate (acyl-PO(4)) from acyl-[acyl-carrier-protein] (acyl-ACP). This enzyme utilizes acyl-ACP as fatty acyl donor, but not acyl-CoA. The sequence is that of Phosphate acyltransferase from Bacillus cereus (strain AH820).